We begin with the raw amino-acid sequence, 124 residues long: Small ribosomal subunit protein uS13c (124 aa).

The disordered stretch occupies residues 100–124; the sequence is GQRTRTNARTRKGKVKTAVAKKKGR. Over residues 101–124 the composition is skewed to basic residues; the sequence is QRTRTNARTRKGKVKTAVAKKKGR.

Belongs to the universal ribosomal protein uS13 family. As to quaternary structure, part of the 30S ribosomal subunit.

It is found in the plastid. Its subcellular location is the chloroplast. In terms of biological role, located at the top of the head of the 30S subunit, it contacts several helices of the 16S rRNA. The chain is Small ribosomal subunit protein uS13c from Emiliania huxleyi (Coccolithophore).